The sequence spans 799 residues: Protein translocase subunit SecA 1 (799 aa).

ATP is bound by residues glutamine 85, 103–107, and aspartate 504; that span reads GEGKT.

It belongs to the SecA family. As to quaternary structure, monomer and homodimer. Part of the essential Sec protein translocation apparatus which comprises SecA, SecYEG and auxiliary proteins SecDF. Other proteins may also be involved.

It localises to the cell membrane. The protein resides in the cytoplasm. The enzyme catalyses ATP + H2O + cellular proteinSide 1 = ADP + phosphate + cellular proteinSide 2.. In terms of biological role, part of the Sec protein translocase complex. Interacts with the SecYEG preprotein conducting channel. Has a central role in coupling the hydrolysis of ATP to the transfer of proteins into and across the cell membrane, serving as an ATP-driven molecular motor driving the stepwise translocation of polypeptide chains across the membrane. The chain is Protein translocase subunit SecA 1 from Lactobacillus johnsonii (strain CNCM I-12250 / La1 / NCC 533).